Consider the following 393-residue polypeptide: Histidinol dehydrogenase (393 aa).

The NAD(+) site is built by tyrosine 112, glutamine 171, and asparagine 194. Positions 217, 239, and 242 each coordinate substrate. Zn(2+)-binding residues include glutamine 239 and histidine 242. Active-site proton acceptor residues include glutamate 293 and histidine 294. Residues histidine 294, aspartate 326, glutamate 379, and histidine 384 each coordinate substrate. Aspartate 326 is a binding site for Zn(2+). Histidine 384 serves as a coordination point for Zn(2+).

The protein belongs to the histidinol dehydrogenase family. Requires Zn(2+) as cofactor.

It carries out the reaction L-histidinol + 2 NAD(+) + H2O = L-histidine + 2 NADH + 3 H(+). Its pathway is amino-acid biosynthesis; L-histidine biosynthesis; L-histidine from 5-phospho-alpha-D-ribose 1-diphosphate: step 9/9. Catalyzes the sequential NAD-dependent oxidations of L-histidinol to L-histidinaldehyde and then to L-histidine. The polypeptide is Histidinol dehydrogenase (Sulfolobus acidocaldarius (strain ATCC 33909 / DSM 639 / JCM 8929 / NBRC 15157 / NCIMB 11770)).